We begin with the raw amino-acid sequence, 688 residues long: Potassium-transporting ATPase ATP-binding subunit (688 aa).

4 helical membrane passes run 34-54 (PVMF…LAIL), 62-82 (AMFT…ANMA), 219-239 (VALT…TATL), and 260-280 (VLVA…LSAI). The 4-aspartylphosphate intermediate role is filled by Asp-313. ATP contacts are provided by residues Asp-350, Glu-354, 383-390 (FSAQTRMS), and Lys-401. Mg(2+) contacts are provided by Asp-524 and Asp-528. Transmembrane regions (helical) follow at residues 594 to 614 (FAII…LNIM), 622 to 642 (AILS…PLAL), and 662 to 682 (IYGL…DLLL).

The protein belongs to the cation transport ATPase (P-type) (TC 3.A.3) family. Type IA subfamily. In terms of assembly, the system is composed of three essential subunits: KdpA, KdpB and KdpC.

It localises to the cell inner membrane. The catalysed reaction is K(+)(out) + ATP + H2O = K(+)(in) + ADP + phosphate + H(+). In terms of biological role, part of the high-affinity ATP-driven potassium transport (or Kdp) system, which catalyzes the hydrolysis of ATP coupled with the electrogenic transport of potassium into the cytoplasm. This subunit is responsible for energy coupling to the transport system and for the release of the potassium ions to the cytoplasm. The chain is Potassium-transporting ATPase ATP-binding subunit from Yersinia pseudotuberculosis serotype O:1b (strain IP 31758).